We begin with the raw amino-acid sequence, 149 residues long: Small ribosomal subunit protein uS19 (149 aa).

The protein belongs to the universal ribosomal protein uS19 family.

Functionally, protein S19 forms a complex with S13 that binds strongly to the 16S ribosomal RNA. The sequence is that of Small ribosomal subunit protein uS19 from Methanopyrus kandleri (strain AV19 / DSM 6324 / JCM 9639 / NBRC 100938).